Reading from the N-terminus, the 502-residue chain is uncharacterized protein (502 aa).

A helical membrane pass occupies residues 1 to 21 (MKIFLVILSVFFFNGCFGLAY). PLD phosphodiesterase domains lie at 162-189 (IKKRMHNKLFIVDNFAVIIGGRNIGDNY) and 396-423 (TKHSLHGKTIVFDDALTLLGSFNIDPRS).

Belongs to the phospholipase D family. Cardiolipin synthase subfamily.

Its subcellular location is the cell membrane. This is an uncharacterized protein from Helicobacter pylori (strain J99 / ATCC 700824) (Campylobacter pylori J99).